A 733-amino-acid chain; its full sequence is MEVDSILGSLSITDDFDQLVDVTSLFDELCSKLKPEAIVKDPRFDLFEGTHSLEVNNSKLDSSLIELTAEEIEFDVNVAYDPPLASVAAIADRLLRCVISWLNDYQTLPTTVLSCRYTESLLSSLVKGTTAGSSWCTGNILYDKVLGSCILGVCYLTKFVQKLLSAGIVFEEEDLNFNNMGFNTFDNLPGQDVVINSLTESLQILEAYSDDSLHLTMLKHILKIIICLVHLEDHLTDYSTKTSHLDELIENANSVNGIFPQLQLSPPKGAFSTYIQKHRSNQFPPRKITKLPTDYSGFITLANDVKTILLVDKAESALETYQFAKFFNKLEQRHVIARILFPLFFIRDDRTVLGKFSYTQFYLLHVKEFSAQTPSEFESSIGNELIQESSNMLLEWYQNCSQNTCRYRQGFNRQLILWDSLQAQFESVNSQVYCSWTYFMKLSSMIEFSLKGFDLDIYKPFEAYSMFWYVYYLSHHLETFLKDSQNDIESNINAIHSMNKKLKKLKAGEKKDQLRLKYRFAMDNEMEQLQATKQFLNYLLKEINITKSLCLIEVFQFAILKSFGLIDNKNSTPSKFSNERLIHNLRFKPFNSIGVPELPEYEVFQQTLKDFVIEEKGAAFDIKLERATNFIETEVRNVVSSIDEIMQGIKGGDNNGVLVTGTRLVQELSLEYYCKLKHTSKALSVNSKVIVNTLKKNIKNKDSHEYKVELVHTTEGWNYFPIQTLRIKQDRYK.

Belongs to the MAK10 family. As to quaternary structure, component of the N-terminal acetyltransferase C (NatC) complex, which is composed of MAK3, MAK10 and MAK31.

It is found in the cytoplasm. Component of the NatC N-terminal acetyltransferase, which catalyzes acetylation of the N-terminus Met of L-A virus Gag protein. MAK10 has a role in the propagation of L-A and M viruses, perhaps in the viral assembly. It is apparently directly needed for optimum respiration. The sequence is that of N-alpha-acetyltransferase 35, NatC auxiliary subunit (MAK10) from Saccharomyces cerevisiae (strain ATCC 204508 / S288c) (Baker's yeast).